Here is a 437-residue protein sequence, read N- to C-terminus: Serine carboxypeptidase-like 17 (437 aa).

Positions 1 to 26 (MGKECYYLSWILKFHLLLVLIQLVDS) are cleaved as a signal peptide. Cystine bridges form between C85-C327, C249-C263, and C287-C293. The N-linked (GlcNAc...) asparagine glycan is linked to N106. S181 is a catalytic residue. D362 is an active-site residue. A glycan (N-linked (GlcNAc...) asparagine) is linked at N378. The active site involves H415.

This sequence belongs to the peptidase S10 family. Expressed in seedlings and siliques.

The protein resides in the secreted. Its function is as follows. Probable carboxypeptidase. This is Serine carboxypeptidase-like 17 (SCPL17) from Arabidopsis thaliana (Mouse-ear cress).